Here is a 193-residue protein sequence, read N- to C-terminus: Interferon type A3 (193 aa).

A signal peptide spans 1–31; that stretch reads MAVPASPQHPRGYGILLLTLLLKALATTASA. 3 cysteine pairs are disulfide-bonded: cysteine 32–cysteine 129, cysteine 61–cysteine 155, and cysteine 68–cysteine 168. N-linked (GlcNAc...) asparagine glycosylation is found at asparagine 65, asparagine 71, asparagine 108, and asparagine 186.

This sequence belongs to the alpha/beta interferon family.

The protein resides in the secreted. In terms of biological role, has antiviral activities. This chain is Interferon type A3 (IFNA3), found in Gallus gallus (Chicken).